A 176-amino-acid chain; its full sequence is Large ribosomal subunit protein eL6A (176 aa).

At Ser2 the chain carries N-acetylserine. Residue Ser12 is modified to Phosphoserine. Lys128 is covalently cross-linked (Glycyl lysine isopeptide (Lys-Gly) (interchain with G-Cter in ubiquitin)).

This sequence belongs to the eukaryotic ribosomal protein eL6 family. As to quaternary structure, component of the large ribosomal subunit (LSU). Mature yeast ribosomes consist of a small (40S) and a large (60S) subunit. The 40S small subunit contains 1 molecule of ribosomal RNA (18S rRNA) and 33 different proteins (encoded by 57 genes). The large 60S subunit contains 3 rRNA molecules (25S, 5.8S and 5S rRNA) and 46 different proteins (encoded by 81 genes). In terms of processing, N-terminally acetylated by acetyltransferase NatA.

It is found in the cytoplasm. Its function is as follows. Component of the ribosome, a large ribonucleoprotein complex responsible for the synthesis of proteins in the cell. The small ribosomal subunit (SSU) binds messenger RNAs (mRNAs) and translates the encoded message by selecting cognate aminoacyl-transfer RNA (tRNA) molecules. The large subunit (LSU) contains the ribosomal catalytic site termed the peptidyl transferase center (PTC), which catalyzes the formation of peptide bonds, thereby polymerizing the amino acids delivered by tRNAs into a polypeptide chain. The nascent polypeptides leave the ribosome through a tunnel in the LSU and interact with protein factors that function in enzymatic processing, targeting, and the membrane insertion of nascent chains at the exit of the ribosomal tunnel. The sequence is that of Large ribosomal subunit protein eL6A from Saccharomyces cerevisiae (strain ATCC 204508 / S288c) (Baker's yeast).